The following is a 334-amino-acid chain: Leucine-rich repeat-containing protein 26 (334 aa).

The signal sequence occupies residues 1 to 30 (MRGSFFSRLPPQLSLLLLLLLLLSWRRVWT). Over 31-265 (QEHIGTDPSK…QCTQSLAARD (235 aa)) the chain is Extracellular. The LRRNT domain maps to 38–75 (PSKSPVAPVCPEACSCSPGGKANCSALALPAVPAGLSW). Intrachain disulfides connect C47–C53 and C51–C61. LRR repeat units follow at residues 76 to 97 (QVRSLLLDRNRVSTLPPGAFAD), 100 to 121 (ALLYLVLRENRLRSVHARAFWG), 124 to 145 (VLQRLDLSSNQLETLSPGTFTP), 148 to 169 (ALSFLSLAGNRLALLEPSILGP), and 172 to 194 (LLRVLSLQDNSLSALEAGLLNSL). The LRRCT domain occupies 205–259 (NPWACSCALRPLCTWLRKHPRPTSETETLLCVSPKLQTLNLLTDFPDNAFKQCTQ). Disulfide bonds link C209-C235 and C211-C257. Residues 266-286 (LAVVYALGPASFLASLAICLA) form a helical membrane-spanning segment. The Cytoplasmic portion of the chain corresponds to 287–334 (LGSVLTACGARRRRRRTTVRHLIRRQPDPEGPASLEDVGSPTTTAIQA). A disordered region spans residues 312 to 334 (QPDPEGPASLEDVGSPTTTAIQA).

In terms of assembly, interacts with KCNMA1.

The protein localises to the cell membrane. It localises to the cytoplasm. It is found in the cytoskeleton. Auxiliary protein of the large-conductance, voltage and calcium-activated potassium channel (BK alpha). Required for the conversion of BK alpha channels from a high-voltage to a low-voltage activated channel type in non-excitable cells. These are characterized by negative membrane voltages and constant low levels of calcium. This chain is Leucine-rich repeat-containing protein 26 (Lrrc26), found in Rattus norvegicus (Rat).